The chain runs to 358 residues: Small ribosomal subunit biogenesis GTPase RsgA (358 aa).

A CP-type G domain is found at serine 76 to proline 234. GTP is bound by residues asparagine 125–aspartate 128 and glycine 176–serine 184. Positions 259, 264, 266, and 272 each coordinate Zn(2+). Residues threonine 319–glutamate 358 are disordered. Basic residues predominate over residues alanine 325–glycine 336. Residues lysine 337–threonine 348 show a composition bias toward basic and acidic residues.

The protein belongs to the TRAFAC class YlqF/YawG GTPase family. RsgA subfamily. Monomer. Associates with 30S ribosomal subunit, binds 16S rRNA. Zn(2+) serves as cofactor.

It is found in the cytoplasm. Functionally, one of several proteins that assist in the late maturation steps of the functional core of the 30S ribosomal subunit. Helps release RbfA from mature subunits. May play a role in the assembly of ribosomal proteins into the subunit. Circularly permuted GTPase that catalyzes slow GTP hydrolysis, GTPase activity is stimulated by the 30S ribosomal subunit. The protein is Small ribosomal subunit biogenesis GTPase RsgA of Microcystis aeruginosa (strain NIES-843 / IAM M-2473).